We begin with the raw amino-acid sequence, 114 residues long: Ribonuclease P protein component (114 aa).

The protein belongs to the RnpA family. In terms of assembly, consists of a catalytic RNA component (M1 or rnpB) and a protein subunit.

The catalysed reaction is Endonucleolytic cleavage of RNA, removing 5'-extranucleotides from tRNA precursor.. In terms of biological role, RNaseP catalyzes the removal of the 5'-leader sequence from pre-tRNA to produce the mature 5'-terminus. It can also cleave other RNA substrates such as 4.5S RNA. The protein component plays an auxiliary but essential role in vivo by binding to the 5'-leader sequence and broadening the substrate specificity of the ribozyme. This chain is Ribonuclease P protein component, found in Buchnera aphidicola subsp. Baizongia pistaciae (strain Bp).